We begin with the raw amino-acid sequence, 49 residues long: Large ribosomal subunit protein bL33B (49 aa).

The protein belongs to the bacterial ribosomal protein bL33 family.

This chain is Large ribosomal subunit protein bL33B (rpmGB), found in Bacillus licheniformis.